The following is a 354-amino-acid chain: D-alanine--D-alanine ligase (354 aa).

The ATP-grasp domain maps to K140 to M344. A170–E225 provides a ligand contact to ATP. Residues D298, E311, and N313 each coordinate Mg(2+).

This sequence belongs to the D-alanine--D-alanine ligase family. It depends on Mg(2+) as a cofactor. Requires Mn(2+) as cofactor.

The protein resides in the cytoplasm. The catalysed reaction is 2 D-alanine + ATP = D-alanyl-D-alanine + ADP + phosphate + H(+). The protein operates within cell wall biogenesis; peptidoglycan biosynthesis. In terms of biological role, cell wall formation. In Blochmanniella floridana, this protein is D-alanine--D-alanine ligase.